A 132-amino-acid chain; its full sequence is Small ribosomal subunit protein uS12 (132 aa).

Position 89 is a 3-methylthioaspartic acid (Asp89). The interval 101-132 is disordered; it reads TLDASGAAGPSSTNKATRNRKRSKYGVKRPKA. A compositionally biased stretch (basic residues) spans 117-132; sequence TRNRKRSKYGVKRPKA.

It belongs to the universal ribosomal protein uS12 family. Part of the 30S ribosomal subunit. Contacts proteins S8 and S17. May interact with IF1 in the 30S initiation complex.

With S4 and S5 plays an important role in translational accuracy. Its function is as follows. Interacts with and stabilizes bases of the 16S rRNA that are involved in tRNA selection in the A site and with the mRNA backbone. Located at the interface of the 30S and 50S subunits, it traverses the body of the 30S subunit contacting proteins on the other side and probably holding the rRNA structure together. The combined cluster of proteins S8, S12 and S17 appears to hold together the shoulder and platform of the 30S subunit. The chain is Small ribosomal subunit protein uS12 from Sorangium cellulosum (strain So ce56) (Polyangium cellulosum (strain So ce56)).